The following is a 159-amino-acid chain: Neuroglobin (159 aa).

Residues 3 to 151 (KLSEKDKELI…VVAAMSQGWA (149 aa)) enclose the Globin domain. Heme b-binding residues include His-66 and His-98.

It belongs to the globin family. As to quaternary structure, monomer. Homodimers and homotetramers. Mainly monomeric but also detected as part of homodimers and homotetramers.

It is found in the cytoplasm. Its subcellular location is the cytosol. The protein localises to the mitochondrion matrix. It carries out the reaction Fe(III)-heme b-[protein] + nitric oxide + H2O = Fe(II)-heme b-[protein] + nitrite + 2 H(+). In terms of biological role, monomeric globin with a bis-histidyl six-coordinate heme-iron atom through which it can bind dioxygen, carbon monoxide and nitric oxide. Could help transport oxygen and increase its availability to the metabolically active neuronal tissues, though its low quantity in tissues as well as its high affinity for dioxygen, which may limit its oxygen-releasing ability, argue against it. The ferrous/deoxygenated form exhibits a nitrite reductase activity and it could produce nitric oxide which in turn inhibits cellular respiration in response to hypoxia. In its ferrous/deoxygenated state, it may also exhibit GDI (Guanine nucleotide Dissociation Inhibitor) activity toward heterotrimeric G-alpha proteins, thereby regulating signal transduction to facilitate neuroprotective responses in the wake of hypoxia and associated oxidative stress. The chain is Neuroglobin (ngb) from Dissostichus mawsoni (Antarctic cod).